The chain runs to 324 residues: Olfactory receptor 7G2 (324 aa).

The Extracellular segment spans residues 1-25 (MEARNQTAISKFLLLGLIEDPELQP). N5 is a glycosylation site (N-linked (GlcNAc...) asparagine). A helical transmembrane segment spans residues 26–46 (VLFSLFLSMYLVTILGNLLIL). Residues 47 to 54 (LAVISDSH) are Cytoplasmic-facing. The helical transmembrane segment at 55–75 (LHTPMYFFLSNLSFLDICLST) threads the bilayer. At 76 to 99 (TTIPKMLVNIQAQNRSITYSGCLT) the chain is on the extracellular side. The N-linked (GlcNAc...) asparagine glycan is linked to N89. C97 and C189 are joined by a disulfide. A helical membrane pass occupies residues 100-120 (QICFVLFFAGLENCLLAAMAY). Residues 121–139 (DRYVAICHPLRYTVIMNPR) are Cytoplasmic-facing. The chain crosses the membrane as a helical span at residues 140 to 160 (LCGLLILLSLLTSVVNALLLS). Over 161–197 (LMVLRLSFCTDLEIPLFFCELAQVIQLTCSDTLINNI) the chain is Extracellular. A helical transmembrane segment spans residues 198 to 217 (LIYFAACIFGGVPLSGIILS). Topologically, residues 218–237 (YTQITSCVLRMPSASGKHKA) are cytoplasmic. Residues 238–258 (VSTCGSHLSIVLLFYGAGLGV) traverse the membrane as a helical segment. The Extracellular segment spans residues 259 to 271 (YISSVVTDSPRKT). The helical transmembrane segment at 272-292 (AVASVMYSVFPQMVNPFIYSL) threads the bilayer. The Cytoplasmic portion of the chain corresponds to 293 to 324 (RNKDMKGTLRKFIGRIPSLLWCAICFGFRFLE).

The protein belongs to the G-protein coupled receptor 1 family.

It is found in the cell membrane. Its function is as follows. Odorant receptor. In Homo sapiens (Human), this protein is Olfactory receptor 7G2 (OR7G2).